A 359-amino-acid chain; its full sequence is Serpentine receptor class epsilon-33 (359 aa).

Helical transmembrane passes span 29 to 49 (VIIS…VNVS), 65 to 85 (ILAL…FITI), 134 to 156 (YMYS…SVLI), 168 to 188 (PAIL…GLLF), 194 to 214 (LSAH…YVFV), 255 to 275 (LVFA…ALHY), and 285 to 305 (LIEN…MLSI).

The protein belongs to the nematode receptor-like protein sre family.

The protein resides in the membrane. This is Serpentine receptor class epsilon-33 (sre-33) from Caenorhabditis elegans.